Consider the following 236-residue polypeptide: Cancer/testis antigen 55 (236 aa).

Positions 57–84 (RSSADVETGDNPLKAEPNLPAAVEEQSP) are disordered.

In terms of assembly, interacts with GABARAP; this interaction may be important for GABARAP protein stability. Interacts with LAMP2; this interaction may be important for LAMP2 protein stability. Expressed in spermatozoa (at protein level).

It is found in the cytoplasm. It localises to the cytoplasmic vesicle. The protein localises to the secretory vesicle. The protein resides in the acrosome. Its subcellular location is the cell projection. It is found in the cilium. It localises to the flagellum. Its function is as follows. Plays a role in spermatogenesis, possibly acting in the regulation of the autophagy pathway. This is Cancer/testis antigen 55 (Ct55) from Mus musculus (Mouse).